The sequence spans 464 residues: Cyclic 2,3-diphosphoglycerate synthetase (464 aa).

Belongs to the cyclic 2,3-diphosphoglycerate synthetase family.

The protein localises to the cytoplasm. It carries out the reaction (2R)-2,3-bisphosphoglycerate + ATP + H(+) = cyclic (2R)-2,3-bisphosphoglycerate + ADP + phosphate. Its activity is regulated as follows. Activity decreases in response to phosphate limitation. Its function is as follows. Catalyzes the formation of cyclic 2,3-diphosphoglycerate (cDPG) by formation of an intramolecular phosphoanhydride bond at the expense of ATP. Not able to catalyze cDPG hydrolysis. May be involved in osmotic balance. This is Cyclic 2,3-diphosphoglycerate synthetase (cpgS) from Methanothermobacter thermautotrophicus (strain ATCC 29096 / DSM 1053 / JCM 10044 / NBRC 100330 / Delta H) (Methanobacterium thermoautotrophicum).